A 999-amino-acid polypeptide reads, in one-letter code: Golgin subfamily A member 2 (999 aa).

A compositionally biased stretch (pro residues) spans 1-11 (MWPPRFPPPRP). Disordered regions lie at residues 1–80 (MWPP…PAPP) and 244–288 (ARQK…YNKD). The tract at residues 1 to 86 (MWPPRFPPPR…PAPPTAATDT (86 aa)) is interaction with p115/USO1. Dimethylated arginine is present on residues R18 and R30. The Nuclear localization signal signature appears at 26 to 49 (KKKLREYQQKNSPGVPAGAKKKKK). Phosphoserine is present on residues S37, S66, S273, and S438. Positions 147–895 (LTSSNMKELE…VLRLVNERNE (749 aa)) form a coiled coil. Residues 271-280 (TLSTVSTQQK) are compositionally biased toward polar residues. Residues 444–468 (SQMEEPPPPEPPAGPSEAEEQLQGE) form a disordered region. The segment covering 448-457 (EPPPPEPPAG) has biased composition (pro residues). 3 positions are modified to phosphoserine: S697, S934, and S978. An interaction with GORASP1/GRASP65 region spans residues 989 to 999 (DENDEVKIMVV).

Belongs to the GOLGA2 family. As to quaternary structure, homodimer, may assemble into homohexamers. Homotetramer; forms a parallel homotetramer with a flexible rod-like structure that can give rise to I- and Y-shaped conformations. Interacts with GORASP1/GRASP65. The homooligomer forms a complex with GORASP1 with a 1:1 stoichiometry. Interacts with RAB1B that has been activated by GTP-binding. Interacts with p115/USO1; interaction with p115/USO1 inhibits interaction with STX5 and/or RAB1B. Interacts with STX5. Interacts with ZFPL1. Interacts with AKAP450/AKAP9; leading to recruit AKAP450/AKAP9 to the cis-Golgi. In terms of processing, phosphorylated at Ser-37 by CDK1 at the onset of mitosis, inhibiting the interaction with p115/USO1 and triggering Golgi disassembly. A report however suggests that Golgi disassembly is independent of phosphorylation at Ser-37. Phosphorylated at Ser-37 in prophase as the Golgi complex starts to break down, and remains phosphorylated during further breakdown and partitioning of the Golgi fragments in metaphase and anaphase. In telophase, GM130 is dephosphorylated by PP2A as the Golgi fragments start to reassemble. Cleaved by caspases at the onset of apoptosis. Post-translationally, methylation by PRMT5 is required for Golgi ribbon formation. Widely expressed. Detected in brain, kidney, lung, liver, spleen, heart, skeletal muscle, thymus and pancreas. Detected in spermatocytes. Present in oocytes during all oocyte meiotic maturation (at protein level).

It localises to the golgi apparatus. The protein resides in the cis-Golgi network membrane. Its subcellular location is the endoplasmic reticulum-Golgi intermediate compartment membrane. The protein localises to the cytoplasm. It is found in the cytoskeleton. It localises to the spindle pole. Functionally, peripheral membrane component of the cis-Golgi stack that acts as a membrane skeleton that maintains the structure of the Golgi apparatus, and as a vesicle thether that facilitates vesicle fusion to the Golgi membrane. Required for normal protein transport from the endoplasmic reticulum to the Golgi apparatus and the cell membrane. Together with p115/USO1 and STX5, involved in vesicle tethering and fusion at the cis-Golgi membrane to maintain the stacked and inter-connected structure of the Golgi apparatus. Plays a central role in mitotic Golgi disassembly: phosphorylation at Ser-37 by CDK1 at the onset of mitosis inhibits the interaction with p115/USO1, preventing tethering of COPI vesicles and thereby inhibiting transport through the Golgi apparatus during mitosis. Also plays a key role in spindle pole assembly and centrosome organization. Promotes the mitotic spindle pole assembly by activating the spindle assembly factor TPX2 to nucleate microtubules around the Golgi and capture them to couple mitotic membranes to the spindle: upon phosphorylation at the onset of mitosis, GOLGA2 interacts with importin-alpha via the nuclear localization signal region, leading to recruit importin-alpha to the Golgi membranes and liberate the spindle assembly factor TPX2 from importin-alpha. TPX2 then activates AURKA kinase and stimulates local microtubule nucleation. Upon filament assembly, nascent microtubules are further captured by GOLGA2, thus linking Golgi membranes to the spindle. Regulates the meiotic spindle pole assembly, probably via the same mechanism. Also regulates the centrosome organization. Also required for the Golgi ribbon formation and glycosylation of membrane and secretory proteins. The sequence is that of Golgin subfamily A member 2 (Golga2) from Mus musculus (Mouse).